We begin with the raw amino-acid sequence, 220 residues long: ATP-dependent Clp protease proteolytic subunit (220 aa).

The active-site Nucleophile is S125. Residue H150 is part of the active site.

This sequence belongs to the peptidase S14 family. Fourteen ClpP subunits assemble into 2 heptameric rings which stack back to back to give a disk-like structure with a central cavity, resembling the structure of eukaryotic proteasomes.

It is found in the cytoplasm. It catalyses the reaction Hydrolysis of proteins to small peptides in the presence of ATP and magnesium. alpha-casein is the usual test substrate. In the absence of ATP, only oligopeptides shorter than five residues are hydrolyzed (such as succinyl-Leu-Tyr-|-NHMec, and Leu-Tyr-Leu-|-Tyr-Trp, in which cleavage of the -Tyr-|-Leu- and -Tyr-|-Trp bonds also occurs).. Cleaves peptides in various proteins in a process that requires ATP hydrolysis. Has a chymotrypsin-like activity. Plays a major role in the degradation of misfolded proteins. The sequence is that of ATP-dependent Clp protease proteolytic subunit from Bacteroides fragilis (strain YCH46).